Consider the following 418-residue polypeptide: Glutamyl-tRNA reductase (418 aa).

Residues 49–52, Ser107, 112–114, and Gln118 each bind substrate; these read TCNR and EPQ. The Nucleophile role is filled by Cys50. NADP(+) is bound at residue 187–192; sequence GAGETI.

Belongs to the glutamyl-tRNA reductase family. In terms of assembly, homodimer.

It catalyses the reaction (S)-4-amino-5-oxopentanoate + tRNA(Glu) + NADP(+) = L-glutamyl-tRNA(Glu) + NADPH + H(+). The protein operates within porphyrin-containing compound metabolism; protoporphyrin-IX biosynthesis; 5-aminolevulinate from L-glutamyl-tRNA(Glu): step 1/2. In terms of biological role, catalyzes the NADPH-dependent reduction of glutamyl-tRNA(Glu) to glutamate 1-semialdehyde (GSA). The polypeptide is Glutamyl-tRNA reductase (Vibrio parahaemolyticus serotype O3:K6 (strain RIMD 2210633)).